Here is an 803-residue protein sequence, read N- to C-terminus: Zinc finger protein 226 (803 aa).

One can recognise a KRAB domain in the interval 8-78 (VTFKDVAVAF…TTATRRQGNL (71 aa)). The C2H2-type 1; degenerate zinc-finger motif lies at 252–274 (YQCNECKKPFSDLSSFDLHQQLQ). Residues 280–302 (LTCVERGKGFCYSPVLPVHQKVH) form a C2H2-type 2; degenerate zinc finger. 17 consecutive C2H2-type zinc fingers follow at residues 307–329 (LKCDECGKEFSQGAHLQTHQKVH), 335–357 (YKCKQCGKGFSRRSALNVHCKVH), 363–385 (YNCEECGRAFSQASHLQDHQRLH), 391–413 (FKCDACGKSFSRNSHLQSHQRVH), 419–441 (YKCEECGKGFICSSNLYIHQRVH), 447–469 (YKCEECGKGFSRPSSLQAHQGVH), 475–497 (YICTVCGKGFTLSSNLQAHQRVH), 503–525 (YKCNECGKSFRRNSHYQVHLVVH), 531–553 (YKCEICGKGFSQSSYLQIHQKAH), 559–581 (FKCEECGQGFNQSSRLQIHQLIH), 587–609 (YKCEECGKGFSRRADLKIHCRIH), 615–637 (YNCEECGKVFRQASNLLAHQRVH), 643–665 (FKCEECGKSFGRSAHLQAHQKVH), 671–693 (YKCDECGKGFKWSLNLDMHQRVH), 699–721 (YKCGECGKYFSQASSLQLHQSVH), 727–749 (YKCDVCGKVFSRSSQLQSHQRVH), and 755–777 (YKCEICGKSFSWRSNLTVHHRIH). Positions 781–803 (KSYKSNRGGKNIRESTQEKKSIK) are disordered. Basic and acidic residues predominate over residues 791 to 803 (NIRESTQEKKSIK).

The protein belongs to the krueppel C2H2-type zinc-finger protein family.

It localises to the nucleus. In terms of biological role, may be involved in transcriptional regulation. This is Zinc finger protein 226 (ZNF226) from Homo sapiens (Human).